Here is a 443-residue protein sequence, read N- to C-terminus: Acid phosphatase type 7 (443 aa).

A signal peptide spans 1 to 23; that stretch reads MAAAPPPPPPLLLLLLCVCAVFA. 3 N-linked (GlcNAc...) asparagine glycosylation sites follow: Asn-53, Asn-76, and Asn-126. Residues Asp-140, Asp-169, and Tyr-172 each contribute to the Fe cation site. Asp-169 lines the Zn(2+) pocket. Zn(2+) is bound at residue Asn-204. N-linked (GlcNAc...) asparagine glycosylation occurs at Asn-210. His-288 provides a ligand contact to Zn(2+). Asn-313 carries N-linked (GlcNAc...) asparagine glycosylation. Position 338 (His-338) interacts with Zn(2+). His-340 serves as a coordination point for Fe cation. N-linked (GlcNAc...) asparagine glycans are attached at residues Asn-355 and Asn-409.

This sequence belongs to the metallophosphoesterase superfamily. Purple acid phosphatase family. It depends on Fe cation as a cofactor. The cofactor is Zn(2+).

The protein localises to the secreted. It carries out the reaction a phosphate monoester + H2O = an alcohol + phosphate. The polypeptide is Acid phosphatase type 7 (Danio rerio (Zebrafish)).